The chain runs to 1034 residues: N-acetyl-beta-glucosaminyl-glycoprotein 4-beta-N-acetylgalactosaminyltransferase 1 (1034 aa).

Residues Met-1–Gln-12 are Cytoplasmic-facing. The chain crosses the membrane as a helical; Signal-anchor for type II membrane protein span at residues Met-13 to Val-31. At His-32–Ser-1034 the chain is on the lumenal side. Positions Asp-51–Pro-104 are disordered. Basic and acidic residues predominate over residues Arg-72–Glu-83. An N-linked (GlcNAc...) asparagine glycan is attached at Asn-106. Residues His-109–His-279 form the PA14 domain. Disordered regions lie at residues Pro-450–Thr-486 and Arg-556–Gly-600. Residues Thr-461–Ser-473 show a composition bias toward low complexity. A glycan (N-linked (GlcNAc...) asparagine) is linked at Asn-611. Disordered regions lie at residues Ser-626–Arg-669 and Gly-782–Ser-801. A compositionally biased stretch (acidic residues) spans Glu-636 to Pro-661.

This sequence belongs to the chondroitin N-acetylgalactosaminyltransferase family.

The protein localises to the golgi apparatus. Its subcellular location is the golgi stack membrane. The enzyme catalyses an N-acetyl-beta-D-glucosaminyl derivative + UDP-N-acetyl-alpha-D-galactosamine = an N-acetyl-beta-D-galactosaminyl-(1-&gt;4)-N-acetyl-beta-D-glucosaminyl derivative + UDP + H(+). Transfers N-acetylgalactosamine (GalNAc) from UDP-GalNAc to N-acetylglucosamine-beta-benzyl with a beta-1,4-linkage to form N,N'-diacetyllactosediamine, GalNAc-beta-1,4-GlcNAc structures in N-linked glycans and probably O-linked glycans. The sequence is that of N-acetyl-beta-glucosaminyl-glycoprotein 4-beta-N-acetylgalactosaminyltransferase 1 (B4galnt4) from Mus musculus (Mouse).